Reading from the N-terminus, the 88-residue chain is UPF0297 protein Cphy_2298 (88 aa).

It belongs to the UPF0297 family.

The chain is UPF0297 protein Cphy_2298 from Lachnoclostridium phytofermentans (strain ATCC 700394 / DSM 18823 / ISDg) (Clostridium phytofermentans).